Consider the following 588-residue polypeptide: Aspartate--tRNA ligase (588 aa).

An L-aspartate-binding site is contributed by Glu-172. An aspartate region spans residues 196-199 (QLFK). Arg-218 provides a ligand contact to L-aspartate. Residues 218–220 (RDE) and Gln-227 contribute to the ATP site. His-449 is a binding site for L-aspartate. ATP is bound at residue Glu-483. Arg-490 serves as a coordination point for L-aspartate. Residue 535 to 538 (GLDR) coordinates ATP.

It belongs to the class-II aminoacyl-tRNA synthetase family. Type 1 subfamily. In terms of assembly, homodimer.

It localises to the cytoplasm. It catalyses the reaction tRNA(Asp) + L-aspartate + ATP = L-aspartyl-tRNA(Asp) + AMP + diphosphate. In terms of biological role, catalyzes the attachment of L-aspartate to tRNA(Asp) in a two-step reaction: L-aspartate is first activated by ATP to form Asp-AMP and then transferred to the acceptor end of tRNA(Asp). The chain is Aspartate--tRNA ligase from Haemophilus influenzae (strain 86-028NP).